Reading from the N-terminus, the 659-residue chain is Endoglucanase A (659 aa).

The interval 1–500 is catalytic; the sequence is MLIFETYLIL…SKLPNFPPKE (500 aa). Aspartate 101 (nucleophile) is an active-site residue. The tract at residues 413 to 433 is disordered; the sequence is NSPKHPHHRTAHGSWSNQLTN. Active-site residues include histidine 419, aspartate 457, and glutamate 466. Positions 501-658 constitute a CBM3 domain; sequence QVEDEFFVEA…GVLVFGTLPD (158 aa).

This sequence belongs to the glycosyl hydrolase 9 (cellulase E) family.

It is found in the secreted. It catalyses the reaction Endohydrolysis of (1-&gt;4)-beta-D-glucosidic linkages in cellulose, lichenin and cereal beta-D-glucans.. Strongly inhibited by ZnCl(2) and by EDTA. Functionally, active on carboxymethyl cellulose and carboxymethyl cellulose-RBB but not avicel, xanthan gum, carboxymethyl-curdulan-RBB or carboxymethyl-xylan-RBB. This Bacillus pumilus (Bacillus mesentericus) protein is Endoglucanase A (eglA).